The primary structure comprises 155 residues: Large ribosomal subunit protein uL13 (155 aa).

Belongs to the universal ribosomal protein uL13 family. Part of the 50S ribosomal subunit.

Functionally, this protein is one of the early assembly proteins of the 50S ribosomal subunit, although it is not seen to bind rRNA by itself. It is important during the early stages of 50S assembly. The protein is Large ribosomal subunit protein uL13 of Rickettsia felis (strain ATCC VR-1525 / URRWXCal2) (Rickettsia azadi).